The sequence spans 396 residues: Elongation factor Tu (396 aa).

Residues 10–206 (KPHVNIGTIG…AVDSYIPEPV (197 aa)) form the tr-type G domain. Positions 19–26 (GHVDHGKT) are G1. GTP is bound at residue 19 to 26 (GHVDHGKT). Mg(2+) is bound at residue T26. Residues 60-64 (GITIA) form a G2 region. Residues 81–84 (DCPG) form a G3 region. GTP is bound by residues 81-85 (DCPGH) and 136-139 (NKAD). Positions 136-139 (NKAD) are G4. The segment at 174-176 (SAL) is G5.

The protein belongs to the TRAFAC class translation factor GTPase superfamily. Classic translation factor GTPase family. EF-Tu/EF-1A subfamily. Monomer.

It is found in the cytoplasm. The catalysed reaction is GTP + H2O = GDP + phosphate + H(+). Functionally, GTP hydrolase that promotes the GTP-dependent binding of aminoacyl-tRNA to the A-site of ribosomes during protein biosynthesis. This is Elongation factor Tu from Geotalea uraniireducens (strain Rf4) (Geobacter uraniireducens).